The following is a 131-amino-acid chain: MSGDFTLVCITAASRHHWGTEVDIFDPDLLPRGQSLQLEPWEYEKGGYFFELSEFLAENLPHFDFALPFMNMQSNKKVGREPWHISYLPLAELASQQFSPEILPQAWKGENILGADCLISHLEQIFSEYIV.

This is an uncharacterized protein from Haemophilus influenzae (strain ATCC 51907 / DSM 11121 / KW20 / Rd).